A 184-amino-acid chain; its full sequence is Tumor necrosis factor receptor superfamily member 17 (184 aa).

The Extracellular portion of the chain corresponds to 1-54; it reads MLQMAGQCSQNEYFDSLLHACIPCQLRCSSNTPPLTCQRYCNASVTNSVKGTNA. The TNFR-Cys repeat unit spans residues 7–41; the sequence is QCSQNEYFDSLLHACIPCQLRCSSNTPPLTCQRYC. Intrachain disulfides connect cysteine 8–cysteine 21, cysteine 24–cysteine 37, and cysteine 28–cysteine 41. The chain crosses the membrane as a helical; Signal-anchor for type III membrane protein span at residues 55–77; the sequence is ILWTCLGLSLIISLAVFVLMFLL. Residues 78-184 are Cytoplasmic-facing; sequence RKINSEPLKD…TEIEKSISAR (107 aa).

Associates with TRAF1, TRAF2, TRAF3, TRAF5 and TRAF6. As to expression, expressed in mature B-cells, but not in T-cells or monocytes.

The protein localises to the cell membrane. The protein resides in the endomembrane system. Functionally, receptor for TNFSF13B/BLyS/BAFF and TNFSF13/APRIL. Promotes B-cell survival and plays a role in the regulation of humoral immunity. Activates NF-kappa-B and JNK. In Homo sapiens (Human), this protein is Tumor necrosis factor receptor superfamily member 17 (TNFRSF17).